The sequence spans 484 residues: tRNA sulfurtransferase (484 aa).

In terms of domain architecture, THUMP spans 63–167; it reads REMIERLTCT…DQRLYVIHNQ (105 aa). ATP-binding positions include 185–186, Lys-267, Gly-289, and Gln-298; that span reads LM. A disulfide bond links Cys-346 and Cys-457. Residues 405 to 483 enclose the Rhodanese domain; that stretch reads ALPGQIVIDI…GHANVRVYRP (79 aa). Catalysis depends on Cys-457, which acts as the Cysteine persulfide intermediate.

The protein belongs to the ThiI family.

The protein localises to the cytoplasm. It catalyses the reaction [ThiI sulfur-carrier protein]-S-sulfanyl-L-cysteine + a uridine in tRNA + 2 reduced [2Fe-2S]-[ferredoxin] + ATP + H(+) = [ThiI sulfur-carrier protein]-L-cysteine + a 4-thiouridine in tRNA + 2 oxidized [2Fe-2S]-[ferredoxin] + AMP + diphosphate. It carries out the reaction [ThiS sulfur-carrier protein]-C-terminal Gly-Gly-AMP + S-sulfanyl-L-cysteinyl-[cysteine desulfurase] + AH2 = [ThiS sulfur-carrier protein]-C-terminal-Gly-aminoethanethioate + L-cysteinyl-[cysteine desulfurase] + A + AMP + 2 H(+). Its pathway is cofactor biosynthesis; thiamine diphosphate biosynthesis. Functionally, catalyzes the ATP-dependent transfer of a sulfur to tRNA to produce 4-thiouridine in position 8 of tRNAs, which functions as a near-UV photosensor. Also catalyzes the transfer of sulfur to the sulfur carrier protein ThiS, forming ThiS-thiocarboxylate. This is a step in the synthesis of thiazole, in the thiamine biosynthesis pathway. The sulfur is donated as persulfide by IscS. This Pseudomonas putida (strain ATCC 47054 / DSM 6125 / CFBP 8728 / NCIMB 11950 / KT2440) protein is tRNA sulfurtransferase.